The chain runs to 112 residues: UPF0102 protein THEYE_A1950 (112 aa).

It belongs to the UPF0102 family.

The polypeptide is UPF0102 protein THEYE_A1950 (Thermodesulfovibrio yellowstonii (strain ATCC 51303 / DSM 11347 / YP87)).